Reading from the N-terminus, the 291-residue chain is 33 kDa chaperonin (291 aa).

2 cysteine pairs are disulfide-bonded: C235–C237 and C268–C271.

It belongs to the HSP33 family. In terms of processing, under oxidizing conditions two disulfide bonds are formed involving the reactive cysteines. Under reducing conditions zinc is bound to the reactive cysteines and the protein is inactive.

It is found in the cytoplasm. Its function is as follows. Redox regulated molecular chaperone. Protects both thermally unfolding and oxidatively damaged proteins from irreversible aggregation. Plays an important role in the bacterial defense system toward oxidative stress. This chain is 33 kDa chaperonin, found in Bacillus pumilus (strain SAFR-032).